A 255-amino-acid chain; its full sequence is Imidazole glycerol phosphate synthase subunit HisF (255 aa).

Residues Asp12 and Asp131 contribute to the active site.

It belongs to the HisA/HisF family. Heterodimer of HisH and HisF.

It localises to the cytoplasm. It carries out the reaction 5-[(5-phospho-1-deoxy-D-ribulos-1-ylimino)methylamino]-1-(5-phospho-beta-D-ribosyl)imidazole-4-carboxamide + L-glutamine = D-erythro-1-(imidazol-4-yl)glycerol 3-phosphate + 5-amino-1-(5-phospho-beta-D-ribosyl)imidazole-4-carboxamide + L-glutamate + H(+). It participates in amino-acid biosynthesis; L-histidine biosynthesis; L-histidine from 5-phospho-alpha-D-ribose 1-diphosphate: step 5/9. IGPS catalyzes the conversion of PRFAR and glutamine to IGP, AICAR and glutamate. The HisF subunit catalyzes the cyclization activity that produces IGP and AICAR from PRFAR using the ammonia provided by the HisH subunit. The polypeptide is Imidazole glycerol phosphate synthase subunit HisF (Salinispora tropica (strain ATCC BAA-916 / DSM 44818 / JCM 13857 / NBRC 105044 / CNB-440)).